A 442-amino-acid polypeptide reads, in one-letter code: Citrate transporter CitP (442 aa).

13 consecutive transmembrane segments (helical) span residues 27 to 47 (ISGI…IAIS), 59 to 79 (IFAL…LPIF), 83 to 103 (LGGG…TNVI), 114 to 134 (FING…SSLF), 151 to 171 (VAFI…VIIG), 177 to 197 (AILY…IVPL), 209 to 229 (SAGI…LAII), 267 to 287 (YVQL…GTML), 293 to 313 (GINA…FGLL), 321 to 341 (VIMF…AGVG), 349 to 369 (VLLA…IVAI), 387 to 409 (AAIT…VLAA), and 421 to 441 (MGNR…VTFM).

This sequence belongs to the 2-hydroxycarboxylate transporter (2-HCT) (TC 2.A.24) family.

It localises to the cell membrane. The enzyme catalyses (R)-lactate(in) + citrate(out) = (R)-lactate(out) + citrate(in). It carries out the reaction (S)-lactate(in) + citrate(out) = (S)-lactate(out) + citrate(in). It catalyses the reaction citrate(in) + H(+)(in) = citrate(out) + H(+)(out). Its activity is regulated as follows. The transport of citrate is unaffected by the presence of citrate in the growth media. Its function is as follows. Secondary transporter involved in citrate metabolism. During cometabolism of citrate and glucose, catalyzes the uptake of divalent citrate into the cell coupled to the exit of monovalent lactate, the end product of glycolysis in L.lactis. The citrate/lactate exchange is electrogenic and results in the generation of a membrane potential. Plays an important role in resistance against lactate toxicity at low pH. In the absence of glucose, i.e. when no lactate is produced, CitP catalyzes the uptake of citrate in exchange with the citrate metabolism intermediates pyruvate and alpha-acetolactate, and the end product acetate. In the absence of glucose, CitP can also catalyze the proton-dependent transport of citrate. In vitro, shows a broad substrate specificity. Can transport a wide variety of mono- and dicarboxylates of the form X-CR(2)-COO(-), where X represents OH (2-hydroxy acid), O (2-keto acid), or H (acid) and R groups differ in size, hydrophobicity and composition. Many of the substrates are intermediates or products of amino acid metabolism, suggesting that CitP may have a broader physiological function than its role in citrate metabolism. The chain is Citrate transporter CitP from Lactococcus lactis subsp. lactis (Streptococcus lactis).